The chain runs to 577 residues: Vacuolar protein sorting-associated protein 45 (577 aa).

The protein belongs to the STXBP/unc-18/SEC1 family. Interacts with PEP7 and TLG2.

Its subcellular location is the cytoplasm. It localises to the vacuole membrane. In terms of biological role, essential for vacuolar protein sorting. Function in membrane traffic between the Golgi and the vacuole. In Saccharomyces cerevisiae (strain ATCC 204508 / S288c) (Baker's yeast), this protein is Vacuolar protein sorting-associated protein 45 (VPS45).